We begin with the raw amino-acid sequence, 314 residues long: Beta-lactamase (314 aa).

Positions 1-39 (MHPSTSRPSRRTLLTATAGAALAAATLVPGTAHASSGGR) form a signal peptide, tat-type signal. The tract at residues 31 to 50 (TAHASSGGRGHGSGSVSDAE) is disordered. Residue Ser-89 is the Acyl-ester intermediate of the active site. 259–261 (KTG) is a binding site for substrate.

This sequence belongs to the class-A beta-lactamase family. In terms of processing, predicted to be exported by the Tat system. The position of the signal peptide cleavage has been experimentally proven.

The enzyme catalyses a beta-lactam + H2O = a substituted beta-amino acid. In Streptomyces albus G, this protein is Beta-lactamase.